Consider the following 181-residue polypeptide: MEVNKKQLADIFGASIRTIQNWQEQGMPVLRGGGKGNEVLYDSAAVIKWYAERDAEIENEKLRREVEELLQASETDLQPGTIEYERHRLTRAQADAQELKNARDSAEVVETAFCTFVLSRIAGEIASILDGIPLSVQRRFPELENRHVDFLKRDIIKAMNKAAALDELIPGLLSEYIEQSG.

This sequence to phage lambda DNA packaging protein NU1.

The sequence is that of DNA-packaging protein NU1 homolog (nohD) from Escherichia coli (strain K12).